The chain runs to 233 residues: Large ribosomal subunit protein uL1 (233 aa).

Belongs to the universal ribosomal protein uL1 family. Part of the 50S ribosomal subunit.

Its function is as follows. Binds directly to 23S rRNA. The L1 stalk is quite mobile in the ribosome, and is involved in E site tRNA release. Functionally, protein L1 is also a translational repressor protein, it controls the translation of the L11 operon by binding to its mRNA. This Shewanella woodyi (strain ATCC 51908 / MS32) protein is Large ribosomal subunit protein uL1.